The primary structure comprises 493 residues: 3-octaprenyl-4-hydroxybenzoate carboxy-lyase (493 aa).

Asparagine 172 provides a ligand contact to Mn(2+). Prenylated FMN is bound by residues 175 to 177 (IYR), 189 to 191 (RWL), and 194 to 195 (RG). Glutamate 238 lines the Mn(2+) pocket. The Proton donor role is filled by aspartate 287.

It belongs to the UbiD family. As to quaternary structure, homohexamer. Prenylated FMN is required as a cofactor. Requires Mn(2+) as cofactor.

Its subcellular location is the cell membrane. It catalyses the reaction a 4-hydroxy-3-(all-trans-polyprenyl)benzoate + H(+) = a 2-(all-trans-polyprenyl)phenol + CO2. It participates in cofactor biosynthesis; ubiquinone biosynthesis. Its function is as follows. Catalyzes the decarboxylation of 3-octaprenyl-4-hydroxy benzoate to 2-octaprenylphenol, an intermediate step in ubiquinone biosynthesis. This Shewanella halifaxensis (strain HAW-EB4) protein is 3-octaprenyl-4-hydroxybenzoate carboxy-lyase.